A 961-amino-acid polypeptide reads, in one-letter code: Retinoblastoma-like protein homolog lin-35 (961 aa).

2 disordered regions span residues 1-43 (MPKR…PPAK) and 55-129 (GGVQ…TPPP). Over residues 68–81 (ELTQMTIKQETEGN) the composition is skewed to polar residues. A compositionally biased stretch (acidic residues) spans 107–119 (GEDDDYEEDDADS). S714 carries the phosphoserine; by CDK4 modification. T719 carries the post-translational modification Phosphothreonine; by CDK4.

The protein belongs to the retinoblastoma protein (RB) family. In terms of assembly, component of the DRM complex, at least composed of lin-9, lin-35, lin-37, lin-52, lin-53, lin-54, dpl-1 and efl-1. Interacts with lin-53. Interacts (via C-terminus) with dpl-1 (via C-terminus) and efl-1 (via C-terminus). Interacts (via C-terminus) with lin-8. Phosphorylated by the cyclin dependent kinase cdk-4. Phosphorylation inhibits the transcriptional repressor activity of lin-35 and allows for progression through the G1 phase of the cell cycle during postembryonic development.

Its subcellular location is the nucleus. Its function is as follows. Key regulator of cell division which acts as a transcriptional repressor and negatively regulates cell cycle progression in its active unphosphorylated form, but allows cell cycle progression when phosphorylated. When unphosphorylated and in its active form, interacts with E2F transcription factors such as efl-1 to repress their transcriptional activity and negatively regulate the progression through the G1 phase of the cell cycle during postembryonic development. May furthermore act with cell cycle regulator cki-1 to negatively regulate cell cycle progression. Acts redundantly with lin-53, fzr-1 and lin-23 to control cell cycle progression by regulating the expression of G1 phase cyclins. In particular, negatively regulates the expression of the cyclin E homolog cye-1, which is essential for the G1/S phase transition. Regulates cell division in the intestinal lineage, repressing the expression of genes such as cdc-25.2, which are required for intestinal cells to transition from the karyokinesis cell cycle (also known as nuclear division) to endoreplication, a specific growth pathway in the intestinal epithelium required for feeding and gut development in growing larvae during the L1 stage molt. Its role as a transcriptional repressor in the regulation of intestinal cell division during postembryonic development is most likely in complex with an E2F cell cycle regulatory transcription factor efl-1 and its binding partner the synthetic multivulva class B protein dpl-1. Synthetic multivulva (synMuv) class B protein. SynMuv proteins are required to repress the induction of vulval development by Ras signaling and probably act by forming the multiprotein DRM complex that represses transcription. Together with synMuv class B protein lin-53, and redundantly with synMuv class A protein lin-15A, represses transcription to control vulval development, most likely through antagonization of the Ras-signaling pathway in the major hypodermal syncytium hyp7. Acts redundantly with the transcriptional corepressor spr-1 and the zinc finger protein zfp-2 to play a role in vulval morphogenesis, promote germline proliferation and somatic gonad development. Acts redundantly with ubc-18 in the regulation of pharyngeal morphogenesis during embryonic development by negatively regulating the expression of proteins such as sup-35. Functions with the SWI/SNF complex and proteins such as pha-1 to regulate larval development. Functions redundantly with xnp-1 to regulate somatic gonad development. Acts redundantly with slr-2 to regulate the expression of intestinal genes required for nutrient utilization. Regulates transcription in response to starvation. Furthermore, in response to starvation, promotes germ cell programmed cell death by negatively regulating the expression of the anti-apoptotic protein ced-9. Conversely, in conjunction with mcd-1, efl-1 and the synthetic multivulva class B proteins dpl-1, lin-37 and lin-52, may also regulate transcription to promote programmed cell death independently of ced-1, ced-8 and ced-9 cell death pathways. Directly involved in heterochromatin formation by maintaining overall chromatin structure and, in particular, that of constitutive heterochromatin by stabilizing histone methylation. In particular, negatively regulates the expression of mes-4, a histone methyltransferase that controls the expression of germline specific genes. May play a role in double strand break formation during meiosis. May suppress sensitivity to RNAi. May play a role in the response to endoplasmic reticulum (ER) stress. The sequence is that of Retinoblastoma-like protein homolog lin-35 from Caenorhabditis elegans.